We begin with the raw amino-acid sequence, 359 residues long: Membrane-bound lytic murein transglycosylase C (359 aa).

The first 16 residues, 1-16 (MKKYLALALIAPLLIS), serve as a signal peptide directing secretion. The N-palmitoyl cysteine moiety is linked to residue C17. C17 carries the S-diacylglycerol cysteine lipid modification.

The protein belongs to the transglycosylase Slt family.

It is found in the cell outer membrane. It catalyses the reaction Exolytic cleavage of the (1-&gt;4)-beta-glycosidic linkage between N-acetylmuramic acid (MurNAc) and N-acetylglucosamine (GlcNAc) residues in peptidoglycan, from either the reducing or the non-reducing ends of the peptidoglycan chains, with concomitant formation of a 1,6-anhydrobond in the MurNAc residue.. Functionally, murein-degrading enzyme. May play a role in recycling of muropeptides during cell elongation and/or cell division. This Escherichia coli (strain SMS-3-5 / SECEC) protein is Membrane-bound lytic murein transglycosylase C.